A 541-amino-acid chain; its full sequence is Membrane protein insertase YidC (541 aa).

The next 5 membrane-spanning stretches (helical) occupy residues 7-27 (LFLV…QTDH), 340-360 (QLIH…TFIV), 415-435 (LGGC…YYML), 453-473 (LAAP…MFFI), and 494-514 (PVIF…YYIV).

The protein belongs to the OXA1/ALB3/YidC family. Type 1 subfamily. As to quaternary structure, interacts with the Sec translocase complex via SecD. Specifically interacts with transmembrane segments of nascent integral membrane proteins during membrane integration.

It is found in the cell inner membrane. In terms of biological role, required for the insertion and/or proper folding and/or complex formation of integral membrane proteins into the membrane. Involved in integration of membrane proteins that insert both dependently and independently of the Sec translocase complex, as well as at least some lipoproteins. Aids folding of multispanning membrane proteins. The sequence is that of Membrane protein insertase YidC from Edwardsiella ictaluri (strain 93-146).